A 109-amino-acid chain; its full sequence is uncharacterized protein (109 aa).

The interval 63–109 (DPSTWEPEEHETEHCRGHTLPEKKQKPQGGHGSDKDEDKGNCGCDHC) is disordered. Basic and acidic residues-rich tracts occupy residues 73 to 87 (ETEH…EKKQ) and 94 to 109 (GSDK…CDHC).

This is an uncharacterized protein from Caenorhabditis elegans.